The following is a 350-amino-acid chain: Pleckstrin (350 aa).

One can recognise a PH 1 domain in the interval 4-101; that stretch reads KRIREGYLVK…WVRDIKKAIK (98 aa). Lys-64 is modified (N6-acetyllysine). Phosphoserine is present on residues Ser-113 and Ser-117. The region spanning 136-221 is the DEP domain; the sequence is PEKGIKELNL…SPDAFYYFPD (86 aa). The region spanning 244 to 347 is the PH 2 domain; sequence VIIKQGCLLK…WIKAIQVASR (104 aa).

In terms of biological role, major protein kinase C substrate of platelets. This is Pleckstrin (Plek) from Mus musculus (Mouse).